A 199-amino-acid chain; its full sequence is NAD(P)H dehydrogenase (quinone) (199 aa).

The 187-residue stretch at 4 to 190 folds into the Flavodoxin-like domain; it reads ILVLYYSMYG…AIARFQGEHV (187 aa). FMN contacts are provided by residues 10 to 15 and 79 to 81; these read SMYGHI and TRF. Residue tyrosine 12 coordinates NAD(+). Residue tryptophan 99 coordinates substrate. FMN-binding positions include 114–119 and histidine 134; that span reads STGTGG.

This sequence belongs to the WrbA family. FMN serves as cofactor.

The catalysed reaction is a quinone + NADH + H(+) = a quinol + NAD(+). It carries out the reaction a quinone + NADPH + H(+) = a quinol + NADP(+). In Yersinia pseudotuberculosis serotype O:1b (strain IP 31758), this protein is NAD(P)H dehydrogenase (quinone).